Consider the following 316-residue polypeptide: Olfactory receptor 10H28 (316 aa).

Residues 1–26 (MPGQNYSTISEFILFGFSAFPHQMLP) are Extracellular-facing. Asn5 carries an N-linked (GlcNAc...) asparagine glycan. The helical transmembrane segment at 27–47 (ALFLLYLLMYLFTLLGNLVIM) threads the bilayer. The Cytoplasmic portion of the chain corresponds to 48–57 (AAIWTEHRLH). The chain crosses the membrane as a helical span at residues 58–78 (TPMYLFLCALSISEILFTVVI). Residues 79–100 (TPRMLSDMLSTHRSITFIACAN) lie on the Extracellular side of the membrane. An intrachain disulfide couples Cys98 to Cys190. Residues 101–121 (QLFFSFTFGYTHSFLLVVMGY) form a helical membrane-spanning segment. Topologically, residues 122–144 (DRYVAICRPLHYHALMSLQGCAR) are cytoplasmic. A helical membrane pass occupies residues 145-165 (LVAWSWAGGSLIGMALTIIIF). The Extracellular segment spans residues 166 to 207 (HLTFCESNVIHHILCHVFSLLKLACGERTAFVTIAVILVCVT). The chain crosses the membrane as a helical span at residues 208-228 (PLIGCLVFIILSYIFIVAAIL). Over 229–241 (RIPSTEGRHKTFS) the chain is Cytoplasmic. A helical membrane pass occupies residues 242-262 (TCASHLTVVIVHYGFASIIYL). Over 263–273 (KSRGLYSQYTD) the chain is Extracellular. The chain crosses the membrane as a helical span at residues 274 to 294 (TLMSTTYTVFTPFLSPIIFSL). Over 295–316 (RNKELKNAIIKSFHRNVCQQSI) the chain is Cytoplasmic.

The protein belongs to the G-protein coupled receptor 1 family.

Its subcellular location is the cell membrane. In terms of biological role, odorant receptor. This Mus musculus (Mouse) protein is Olfactory receptor 10H28.